Consider the following 653-residue polypeptide: Mannosyl-oligosaccharide 1,2-alpha-mannosidase IA (653 aa).

Residues Met1 to Lys41 lie on the Cytoplasmic side of the membrane. The chain crosses the membrane as a helical; Signal-anchor for type II membrane protein span at residues Phe42–Leu62. Residues Pro63 to Glu653 lie on the Lumenal side of the membrane. A disordered region spans residues Gln81–Ala116. Basic and acidic residues predominate over residues Ala84–Gly108. Cys476 and Cys508 are disulfide-bonded. N-linked (GlcNAc...) asparagine glycosylation is present at Asn513. The Proton donor role is filled by Glu522.

Belongs to the glycosyl hydrolase 47 family. The cofactor is Ca(2+).

It localises to the golgi apparatus membrane. It catalyses the reaction N(4)-(alpha-D-Man-(1-&gt;2)-alpha-D-Man-(1-&gt;2)-alpha-D-Man-(1-&gt;3)-[alpha-D-Man-(1-&gt;2)-alpha-D-Man-(1-&gt;3)-[alpha-D-Man-(1-&gt;2)-alpha-D-Man-(1-&gt;6)]-alpha-D-Man-(1-&gt;6)]-beta-D-Man-(1-&gt;4)-beta-D-GlcNAc-(1-&gt;4)-beta-D-GlcNAc)-L-asparaginyl-[protein] (N-glucan mannose isomer 9A1,2,3B1,2,3) + 4 H2O = N(4)-(alpha-D-Man-(1-&gt;3)-[alpha-D-Man-(1-&gt;3)-[alpha-D-Man-(1-&gt;6)]-alpha-D-Man-(1-&gt;6)]-beta-D-Man-(1-&gt;4)-beta-D-GlcNAc-(1-&gt;4)-beta-D-GlcNAc)-L-asparaginyl-[protein] (N-glucan mannose isomer 5A1,2) + 4 beta-D-mannose. The enzyme catalyses N(4)-(alpha-D-Man-(1-&gt;2)-alpha-D-Man-(1-&gt;2)-alpha-D-Man-(1-&gt;3)-[alpha-D-Man-(1-&gt;3)-[alpha-D-Man-(1-&gt;2)-alpha-D-Man-(1-&gt;6)]-alpha-D-Man-(1-&gt;6)]-beta-D-Man-(1-&gt;4)-beta-D-GlcNAc-(1-&gt;4)-beta-D-GlcNAc)-L-asparaginyl-[protein] (N-glucan mannose isomer 8A1,2,3B1,3) + 3 H2O = N(4)-(alpha-D-Man-(1-&gt;3)-[alpha-D-Man-(1-&gt;3)-[alpha-D-Man-(1-&gt;6)]-alpha-D-Man-(1-&gt;6)]-beta-D-Man-(1-&gt;4)-beta-D-GlcNAc-(1-&gt;4)-beta-D-GlcNAc)-L-asparaginyl-[protein] (N-glucan mannose isomer 5A1,2) + 3 beta-D-mannose. It participates in protein modification; protein glycosylation. Its activity is regulated as follows. Inhibited by both 1-deoxymannojirimycin and kifunensine. Functionally, involved in the maturation of Asn-linked oligosaccharides. Progressively trim alpha-1,2-linked mannose residues from Man(9)GlcNAc(2) to produce Man(5)GlcNAc(2). In Homo sapiens (Human), this protein is Mannosyl-oligosaccharide 1,2-alpha-mannosidase IA (MAN1A1).